The following is a 156-amino-acid chain: uncharacterized protein (156 aa).

One can recognise an N-acetyltransferase domain in the interval 1–145; the sequence is MIIRKFSSKD…DAILMIKKKP (145 aa).

The protein belongs to the acetyltransferase family.

It localises to the cytoplasm. This is an uncharacterized protein from Methanocaldococcus jannaschii (strain ATCC 43067 / DSM 2661 / JAL-1 / JCM 10045 / NBRC 100440) (Methanococcus jannaschii).